The primary structure comprises 649 residues: FAS-associated factor 1 (649 aa).

The UBA domain occupies 1-57; the sequence is MASNMDREMILADFQACTGIENIDEAITLLEQNNWDLVAAINGVIPQENGILQSDFG. Positions 55 to 84 are disordered; sequence DFGGETMPGPTFDPASPPAPAPAPSSSAFR. Ser-319 carries the phosphoserine modification. Residues 568–645 form the UBX domain; that stretch reads NAEPVSKLRI…NLFPQETLFL (78 aa). Thr-579 bears the Phosphothreonine mark. Ser-581 is modified (phosphoserine).

In terms of assembly, interacts with CDT1 and ATPase VCP/p97. Interacts (via UBA domain) with FAS (via death domain). Interacts (via UBA domain) with NLRP12 (via DAPIN/PYRIN domain). Central nervous system.

The protein localises to the nucleus. Ubiquitin-binding protein. Required for the progression of DNA replication forks by targeting DNA replication licensing factor CDT1 for degradation. Potentiates but cannot initiate FAS-induced apoptosis. The sequence is that of FAS-associated factor 1 (Faf1) from Rattus norvegicus (Rat).